Here is a 587-residue protein sequence, read N- to C-terminus: Glutamine--tRNA ligase (587 aa).

The short motif at 58–68 is the 'HIGH' region element; sequence PEPNGYLHIGH. Residues 59–61 and 65–71 contribute to the ATP site; these read EPN and HIGHAKS. L-glutamine-binding residues include Asp-91 and Tyr-240. ATP contacts are provided by residues Thr-259 and 294 to 295; that span reads RL. The short motif at 301-305 is the 'KMSKS' region element; that stretch reads VTSKR.

Belongs to the class-I aminoacyl-tRNA synthetase family. Monomer.

The protein resides in the cytoplasm. The enzyme catalyses tRNA(Gln) + L-glutamine + ATP = L-glutaminyl-tRNA(Gln) + AMP + diphosphate. The chain is Glutamine--tRNA ligase from Bordetella parapertussis (strain 12822 / ATCC BAA-587 / NCTC 13253).